The chain runs to 657 residues: Glycogen debranching enzyme (657 aa).

Asp336 (nucleophile) is an active-site residue. The active-site Proton donor is Glu371. Residues 458–467 are compositionally biased toward basic and acidic residues; that stretch reads NEANGEENRD. The segment at 458–479 is disordered; that stretch reads NEANGEENRDGTNNNYSNNHGK.

Belongs to the glycosyl hydrolase 13 family.

It carries out the reaction Hydrolysis of (1-&gt;6)-alpha-D-glucosidic linkages to branches with degrees of polymerization of three or four glucose residues in limit dextrin.. Its pathway is glycan degradation; glycogen degradation. Its function is as follows. Removes maltotriose and maltotetraose chains that are attached by 1,6-alpha-linkage to the limit dextrin main chain, generating a debranched limit dextrin. The chain is Glycogen debranching enzyme from Escherichia coli O8 (strain IAI1).